The primary structure comprises 328 residues: UPF0421 protein SAV1889 (328 aa).

4 helical membrane passes run 19-39 (IAIF…IYAI), 61-81 (LPAT…FGDQ), 108-128 (VAVL…IFNF), and 132-152 (TLTA…VFPP).

Belongs to the UPF0421 family.

It localises to the cell membrane. In Staphylococcus aureus (strain Mu50 / ATCC 700699), this protein is UPF0421 protein SAV1889.